We begin with the raw amino-acid sequence, 251 residues long: Ubiquinone/menaquinone biosynthesis C-methyltransferase UbiE (251 aa).

S-adenosyl-L-methionine contacts are provided by residues T74, D95, N123–A124, and S140.

It belongs to the class I-like SAM-binding methyltransferase superfamily. MenG/UbiE family.

The catalysed reaction is a 2-demethylmenaquinol + S-adenosyl-L-methionine = a menaquinol + S-adenosyl-L-homocysteine + H(+). It catalyses the reaction a 2-methoxy-6-(all-trans-polyprenyl)benzene-1,4-diol + S-adenosyl-L-methionine = a 5-methoxy-2-methyl-3-(all-trans-polyprenyl)benzene-1,4-diol + S-adenosyl-L-homocysteine + H(+). The protein operates within quinol/quinone metabolism; menaquinone biosynthesis; menaquinol from 1,4-dihydroxy-2-naphthoate: step 2/2. It participates in cofactor biosynthesis; ubiquinone biosynthesis. Methyltransferase required for the conversion of demethylmenaquinol (DMKH2) to menaquinol (MKH2) and the conversion of 2-polyprenyl-6-methoxy-1,4-benzoquinol (DDMQH2) to 2-polyprenyl-3-methyl-6-methoxy-1,4-benzoquinol (DMQH2). This is Ubiquinone/menaquinone biosynthesis C-methyltransferase UbiE from Yersinia enterocolitica serotype O:8 / biotype 1B (strain NCTC 13174 / 8081).